We begin with the raw amino-acid sequence, 361 residues long: tRNA 2-selenouridine synthase (361 aa).

A Rhodanese domain is found at 12–135 (VLKNIPLIDV…FRRYLIDHLE (124 aa)). Cysteine 95 functions as the S-selanylcysteine intermediate in the catalytic mechanism.

The protein belongs to the SelU family. In terms of assembly, monomer.

It catalyses the reaction 5-methylaminomethyl-2-thiouridine(34) in tRNA + selenophosphate + (2E)-geranyl diphosphate + H2O + H(+) = 5-methylaminomethyl-2-selenouridine(34) in tRNA + (2E)-thiogeraniol + phosphate + diphosphate. The enzyme catalyses 5-methylaminomethyl-2-thiouridine(34) in tRNA + (2E)-geranyl diphosphate = 5-methylaminomethyl-S-(2E)-geranyl-thiouridine(34) in tRNA + diphosphate. It carries out the reaction 5-methylaminomethyl-S-(2E)-geranyl-thiouridine(34) in tRNA + selenophosphate + H(+) = 5-methylaminomethyl-2-(Se-phospho)selenouridine(34) in tRNA + (2E)-thiogeraniol. The catalysed reaction is 5-methylaminomethyl-2-(Se-phospho)selenouridine(34) in tRNA + H2O = 5-methylaminomethyl-2-selenouridine(34) in tRNA + phosphate. Its function is as follows. Involved in the post-transcriptional modification of the uridine at the wobble position (U34) of tRNA(Lys), tRNA(Glu) and tRNA(Gln). Catalyzes the conversion of 2-thiouridine (S2U-RNA) to 2-selenouridine (Se2U-RNA). Acts in a two-step process involving geranylation of 2-thiouridine (S2U) to S-geranyl-2-thiouridine (geS2U) and subsequent selenation of the latter derivative to 2-selenouridine (Se2U) in the tRNA chain. The sequence is that of tRNA 2-selenouridine synthase from Hydrogenovibrio crunogenus (strain DSM 25203 / XCL-2) (Thiomicrospira crunogena).